Here is a 195-residue protein sequence, read N- to C-terminus: Recombination protein RecR (195 aa).

The C4-type zinc-finger motif lies at 53–68; the sequence is CTICHNLDTISPCSIC. The 96-residue stretch at 76-171 folds into the Toprim domain; it reads SIICVVEELG…KVTRLACGIP (96 aa).

The protein belongs to the RecR family.

In terms of biological role, may play a role in DNA repair. It seems to be involved in an RecBC-independent recombinational process of DNA repair. It may act with RecF and RecO. This is Recombination protein RecR from Anaplasma marginale (strain St. Maries).